Here is a 270-residue protein sequence, read N- to C-terminus: uncharacterized protein (270 aa).

Possibly involved in pGI2 replication mechanism. This is an uncharacterized protein from Bacillus thuringiensis.